Here is a 344-residue protein sequence, read N- to C-terminus: 2-methyl-6-phytyl-1,4-hydroquinone methyltransferase, chloroplastic (344 aa).

Residues 1 to 62 constitute a chloroplast transit peptide; the sequence is MACSMLNGVD…LTTVTKCTLS (62 aa). Residues 63–313 lie on the Chloroplast intermembrane side of the membrane; sequence ASERPASQPR…PVHPLVFLYR (251 aa). Residues 121 to 130 form an SAM motif I region; the sequence is VVDVGGGTGF. Positions 166-179 are SAM motif II; the sequence is CRIIEGDAEDLPFP. The SAM motif III stretch occupies residues 207–220; sequence RVLKLGGKACLIGP. The chain crosses the membrane as a helical span at residues 314–334; the sequence is FLLGALASTYYVLVPIYMWIK. Over 335-344 the chain is Stromal; that stretch reads DKIFPKGMPL.

Belongs to the class I-like SAM-binding methyltransferase superfamily. MPBQ/MBSQ MT family.

It localises to the plastid. The protein localises to the chloroplast inner membrane. The enzyme catalyses 2-methyl-6-phytyl-1,4-benzene-1,4-diol + S-adenosyl-L-methionine = 2,3-dimethyl-6-phytylbenzene-1,4-diol + S-adenosyl-L-homocysteine + H(+). It carries out the reaction 2-methyl-6-(all-trans-nonaprenyl)benzene-1,4-diol + S-adenosyl-L-methionine = plastoquinol-9 + S-adenosyl-L-homocysteine + H(+). It catalyses the reaction 6-geranylgeranyl-2-methylbenzene-1,4-diol + S-adenosyl-L-methionine = 6-geranylgeranyl-2,3-dimethylbenzene-1,4-diol + S-adenosyl-L-homocysteine + H(+). The protein operates within cofactor biosynthesis; tocopherol biosynthesis. In terms of biological role, involved in a key methylation step in both tocopherols (vitamin E) and plastoquinone synthesis. Catalyzes the conversion of 2-methyl-6-phytyl-1,4-hydroquinone (MPBQ) to 2,3-dimethyl-6-phytyl-1,4-hydroquinone (DMPQ, a substrate for tocopherol cyclase), and 2-methyl-6-solanyl-1,4-benzoquinone (MSBQ) to plastoquinone. The protein is 2-methyl-6-phytyl-1,4-hydroquinone methyltransferase, chloroplastic of Spinacia oleracea (Spinach).